The primary structure comprises 456 residues: Nitrogenase molybdenum-iron protein beta chain (456 aa).

Residues C23, C48, C106, and S141 each coordinate [8Fe-7S] cluster.

It belongs to the NifD/NifK/NifE/NifN family. In terms of assembly, tetramer of two alpha and two beta chains. Forms complex with the iron protein (nitrogenase component 2). [8Fe-7S] cluster is required as a cofactor.

It carries out the reaction N2 + 8 reduced [2Fe-2S]-[ferredoxin] + 16 ATP + 16 H2O = H2 + 8 oxidized [2Fe-2S]-[ferredoxin] + 2 NH4(+) + 16 ADP + 16 phosphate + 6 H(+). Functionally, this molybdenum-iron protein is part of the nitrogenase complex that catalyzes the key enzymatic reactions in nitrogen fixation. This Methanosarcina barkeri protein is Nitrogenase molybdenum-iron protein beta chain (nifK2).